An 881-amino-acid chain; its full sequence is Formin-like protein 10 (881 aa).

Residues 1–24 form the signal peptide; that stretch reads MAMKRVVFLLLLVAASALVKSSRG. The disordered stretch occupies residues 194–223; the sequence is LTPSNSLNMEPPSPYYPSKSAHKHQGVAPP. Residues 236-256 traverse the membrane as a helical segment; the sequence is VVLIAVLPTAALSFLAAFLCF. The segment covering 333-346 has biased composition (polar residues); the sequence is TLVTGGTQENNATS. Disordered regions lie at residues 333-427, 683-703, and 837-881; these read TLVT…EVNA, ENGR…ESLQ, and ASQK…DSND. A compositionally biased stretch (pro residues) spans 351-390; it reads LMPPPPPPPPPPPPPPPPPPPRPPPPPPPIKKGAPPPAPP. Low complexity predominate over residues 400-424; it reads LSPTESSRSEESSASELASESSETE. The FH2 domain occupies 422–854; that stretch reads ETEVNAPRAK…KSQANGNSNN (433 aa). Residues 692–701 show a composition bias toward polar residues; that stretch reads STSDDNSNES. Residues 846 to 865 are compositionally biased toward low complexity; the sequence is SQANGNSNNPSSQSNPQEQQ. Positions 870–881 are enriched in basic and acidic residues; sequence LDHHFDSSDSND.

It belongs to the formin-like family. Class-I subfamily.

The protein localises to the membrane. This chain is Formin-like protein 10 (FH10), found in Oryza sativa subsp. japonica (Rice).